Here is a 183-residue protein sequence, read N- to C-terminus: Erythropoietin (183 aa).

A signal peptide spans 1–23; sequence MFHGSGLFALLLMVLEWTRPGLS. 2 disulfides stabilise this stretch: Cys-30/Cys-178 and Cys-52/Cys-56. 2 N-linked (GlcNAc...) asparagine glycosylation sites follow: Asn-61 and Asn-104.

This sequence belongs to the EPO/TPO family. Post-translationally, N-glycosylated. As to expression, expressed in heart and liver.

The protein resides in the secreted. In terms of biological role, erythropoietin is the principal hormone involved in the regulation of erythrocyte differentiation and the maintenance of a physiological level of circulating erythrocyte mass. This is Erythropoietin (epo) from Danio rerio (Zebrafish).